The following is a 393-amino-acid chain: Translation initiation factor eIF2B subunit beta (393 aa).

Positions 105-125 (VSSSNSSSPSQKRDIPSNEKL) are disordered. Phosphoserine is present on residues Ser-106, Ser-108, and Ser-112.

It belongs to the eIF-2B alpha/beta/delta subunits family. Component of the translation initiation factor 2B (eIF2B) complex which is a heterodecamer of two sets of five different subunits: alpha, beta, gamma, delta and epsilon. Subunits alpha, beta and delta comprise a regulatory subcomplex and subunits epsilon and gamma comprise a catalytic subcomplex. Within the complex, the hexameric regulatory complex resides at the center, with the two heterodimeric catalytic subcomplexes bound on opposite sides.

It is found in the cytoplasm. The protein resides in the cytosol. Its function is as follows. Acts as a component of the translation initiation factor 2B (eIF2B) complex, which catalyzes the exchange of GDP for GTP on the eukaryotic initiation factor 2 (eIF2) complex gamma subunit. Its guanine nucleotide exchange factor activity is repressed when bound to eIF2 complex phosphorylated on the alpha subunit, thereby limiting the amount of methionyl-initiator methionine tRNA available to the ribosome and consequently global translation is repressed. The sequence is that of Translation initiation factor eIF2B subunit beta (tif222) from Schizosaccharomyces pombe (strain 972 / ATCC 24843) (Fission yeast).